A 244-amino-acid chain; its full sequence is Flagellar L-ring protein (244 aa).

The N-terminal stretch at 1–18 (MNMRVFIFLIFAAASVSA) is a signal peptide. Cys19 carries the N-palmitoyl cysteine lipid modification. A lipid anchor (S-diacylglycerol cysteine) is attached at Cys19.

Belongs to the FlgH family. As to quaternary structure, the basal body constitutes a major portion of the flagellar organelle and consists of four rings (L,P,S, and M) mounted on a central rod.

The protein resides in the cell outer membrane. It is found in the bacterial flagellum basal body. Functionally, assembles around the rod to form the L-ring and probably protects the motor/basal body from shearing forces during rotation. This chain is Flagellar L-ring protein, found in Jannaschia sp. (strain CCS1).